Reading from the N-terminus, the 530-residue chain is Tegument protein UL21 homolog (530 aa).

This sequence belongs to the alphaherpesvirinae UL21 protein family. Interacts (via C-terminus) with UL16.

The protein localises to the virion tegument. It is found in the host cytoplasm. The protein resides in the host nucleus. Functionally, may participate in DNA packaging/capsid maturation events. Promotes efficient incorporation of tegument proteins UL46, UL49, and US3 homologs into virions. May also play a role in capsid transport to the trans-Golgi network (TGN). This chain is Tegument protein UL21 homolog, found in Equus caballus (Horse).